The primary structure comprises 463 residues: UDP-N-acetylmuramate--L-alanine ligase (463 aa).

ATP is bound at residue 112–118 (GTHGKTT).

The protein belongs to the MurCDEF family.

The protein localises to the cytoplasm. It catalyses the reaction UDP-N-acetyl-alpha-D-muramate + L-alanine + ATP = UDP-N-acetyl-alpha-D-muramoyl-L-alanine + ADP + phosphate + H(+). It functions in the pathway cell wall biogenesis; peptidoglycan biosynthesis. In terms of biological role, cell wall formation. This Thiobacillus denitrificans (strain ATCC 25259 / T1) protein is UDP-N-acetylmuramate--L-alanine ligase.